A 421-amino-acid polypeptide reads, in one-letter code: Testin (421 aa).

The PET domain occupies 92-199 (MILTNPVAAK…GDVKLPRDMN (108 aa)). 2 disordered regions span residues 133–164 (EKQP…PSKC) and 193–213 (KLPR…GGDR). Residues 155–164 (PAHDQDPSKC) show a composition bias toward basic and acidic residues. LIM zinc-binding domains are found at residues 234-297 (YSCY…CDSE), 299-359 (PRCA…NHAV), and 362-421 (QGCH…KMMS).

It belongs to the prickle / espinas / testin family. In terms of assembly, interacts via LIM domain 1 with ZYX. Interacts (via LIM domain 3) with ENAH and VASP. Interacts with ALKBH4, talin, actin, alpha-actinin, GRIP1 and PXN. Interacts (via LIM domain 2) with ACTL7A (via N-terminus). Heterodimer with ACTL7A; the heterodimer interacts with ENAH to form a heterotrimer.

Its subcellular location is the cytoplasm. It localises to the cell junction. The protein localises to the focal adhesion. Scaffold protein that may play a role in cell adhesion, cell spreading and in the reorganization of the actin cytoskeleton. Plays a role in the regulation of cell proliferation. May act as a tumor suppressor. This is Testin (TES) from Muntiacus muntjak (Barking deer).